The primary structure comprises 301 residues: tRNA dimethylallyltransferase (301 aa).

12-19 contributes to the ATP binding site; the sequence is GPTAVGKT. A substrate-binding site is contributed by 14–19; the sequence is TAVGKT. The interval 37 to 40 is interaction with substrate tRNA; it reads DSQQ.

This sequence belongs to the IPP transferase family. Monomer. It depends on Mg(2+) as a cofactor.

The enzyme catalyses adenosine(37) in tRNA + dimethylallyl diphosphate = N(6)-dimethylallyladenosine(37) in tRNA + diphosphate. Its function is as follows. Catalyzes the transfer of a dimethylallyl group onto the adenine at position 37 in tRNAs that read codons beginning with uridine, leading to the formation of N6-(dimethylallyl)adenosine (i(6)A). The chain is tRNA dimethylallyltransferase from Streptococcus uberis (strain ATCC BAA-854 / 0140J).